The sequence spans 166 residues: Disulfide bond formation protein B (166 aa).

Over 1–11 the chain is Cytoplasmic; sequence MCNKLFAGRRG. Residues 12-28 form a helical membrane-spanning segment; sequence YFLGFVASFGLVGLALF. The Periplasmic segment spans residues 29 to 46; sequence LQQKYNLEPCPLCISQRI. Residues Cys38 and Cys41 are joined by a disulfide bond. The chain crosses the membrane as a helical span at residues 47–63; sequence AFMALGILFLLAALHNP. The Cytoplasmic segment spans residues 64 to 69; sequence GRVGRK. A helical membrane pass occupies residues 70–87; sequence VYGLLHVIAAATGIGIAA. Residues 88-144 are Periplasmic-facing; that stretch reads RHIWIQANPDKVMAECGAGFDYIMETFPLKKALDLIFKGTGECSAIDWTLFGLTIPQ. Residues Cys103 and Cys130 are joined by a disulfide bond. A helical transmembrane segment spans residues 145–163; sequence LSLIAFVGLGLFAVLLAFH. Over 164–166 the chain is Cytoplasmic; it reads KKA.

This sequence belongs to the DsbB family.

It localises to the cell inner membrane. Required for disulfide bond formation in some periplasmic proteins. Acts by oxidizing the DsbA protein. In Methylobacillus flagellatus (strain ATCC 51484 / DSM 6875 / VKM B-1610 / KT), this protein is Disulfide bond formation protein B.